Reading from the N-terminus, the 409-residue chain is Multidrug efflux pump Tap (409 aa).

12 helical membrane-spanning segments follow: residues Leu10 to Phe30, Ile46 to Val66, Leu80 to Val98, Ala104 to Ala123, Ser144 to Leu168, Met174 to Leu193, Phe218 to Met240, Leu260 to Ser282, Ala289 to Leu308, Leu313 to Val335, Val348 to Leu370, and Gly375 to Leu397.

It belongs to the major facilitator superfamily. Drug:H(+) antiporter-3 (DHA3) (TC 2.A.1.21) family.

Its subcellular location is the cell inner membrane. Efflux activity is inhibited by carbonyl cyanide m-chlorophenylhydrazone (CCCP) and reserpine, but not by o-vanadate or chlorpromazine (CPZ). Efflux pump that contributes to intrinsic antibiotic resistance. The pump uses the electrochemical gradient as a source of energy. Confers low-level resistance to tetracycline and to several aminoglycosides, including streptomycin, gentamicin, 2'-N-ethylnetilmicin and 6'-N-ethylnetilmicin. The protein is Multidrug efflux pump Tap of Mycolicibacterium fortuitum (Mycobacterium fortuitum).